Here is a 65-residue protein sequence, read N- to C-terminus: Toxin KTx8 (65 aa).

Positions 1–25 (MNKVCFVVVLVLFVALAAYVSPIEG) are cleaved as a signal peptide. Intrachain disulfides connect C31–C53, C38–C61, and C42–C63.

This sequence belongs to the short scorpion toxin superfamily. Potassium channel inhibitor family. Alpha-KTx 11 subfamily. In terms of tissue distribution, expressed by the venom gland.

Its subcellular location is the secreted. This recombinant toxin inhibits the mammalian voltage-gated potassium channels Kv1.3/KCNA3 in vitro with an IC(50) of 26.40 nM. The sequence is that of Toxin KTx8 from Lychas mucronatus (Chinese swimming scorpion).